A 377-amino-acid polypeptide reads, in one-letter code: MEDDGYNYYGADNQSECDYADWTPSGALIPAIYILVFLLGTTGNGLVLWTVFWSSREKRRSADIFIASLAVADLTFVVTLPLWATYTYREFDWPFGTFSCKLSSYLIFVNMYASVFCLTGLSFDRYLAIVRPVANARLRLRVSGAVATAVLWVLAALLAVPVMVFRSTDIPENSTKTQCYMDYSMVATSNSEWAWEVGLGVSSTAVGFVVPFIIMLTCYFFIAQTIAGHFRKERIEGLRKRRRLLSIIVVLVVTFALCWMPYHLVKTLYMLGNLLHWPCDFDSFLMNVFPYCTCISYVNSCLNPFLYAFFDPRFRRACTSMLCCDQSGCKGSPHSSSAEKSASYSSGHSQGPGPNMCKGGEPMHEKSIPYSQETLVD.

Topologically, residues 1-28 (MEDDGYNYYGADNQSECDYADWTPSGAL) are extracellular. Asparagine 13 is a glycosylation site (N-linked (GlcNAc...) asparagine). 2 disulfides stabilise this stretch: cysteine 17/cysteine 279 and cysteine 100/cysteine 179. The chain crosses the membrane as a helical span at residues 29–52 (IPAIYILVFLLGTTGNGLVLWTVF). At 53–62 (WSSREKRRSA) the chain is on the cytoplasmic side. A helical membrane pass occupies residues 63 to 84 (DIFIASLAVADLTFVVTLPLWA). Residues 85–97 (TYTYREFDWPFGT) are Extracellular-facing. A helical membrane pass occupies residues 98 to 123 (FSCKLSSYLIFVNMYASVFCLTGLSF). At 124–144 (DRYLAIVRPVANARLRLRVSG) the chain is on the cytoplasmic side. Residues 145–162 (AVATAVLWVLAALLAVPV) form a helical membrane-spanning segment. Residues 163–196 (MVFRSTDIPENSTKTQCYMDYSMVATSNSEWAWE) lie on the Extracellular side of the membrane. An N-linked (GlcNAc...) asparagine glycan is attached at asparagine 173. A helical transmembrane segment spans residues 197 to 221 (VGLGVSSTAVGFVVPFIIMLTCYFF). Over 222–244 (IAQTIAGHFRKERIEGLRKRRRL) the chain is Cytoplasmic. A helical transmembrane segment spans residues 245–268 (LSIIVVLVVTFALCWMPYHLVKTL). Over 269–287 (YMLGNLLHWPCDFDSFLMN) the chain is Extracellular. A helical membrane pass occupies residues 288–310 (VFPYCTCISYVNSCLNPFLYAFF). At 311-377 (DPRFRRACTS…IPYSQETLVD (67 aa)) the chain is on the cytoplasmic side. The span at 335–349 (SSSAEKSASYSSGHS) shows a compositional bias: low complexity. Residues 335-377 (SSSAEKSASYSSGHSQGPGPNMCKGGEPMHEKSIPYSQETLVD) form a disordered region.

It belongs to the G-protein coupled receptor 1 family. As to quaternary structure, homodimer; dimerization inhibits APLNR-mediated G protein and beta-arrestin signaling pathways compared to monomeric APLNR. As to expression, widely expressed. Highest expression in the lung, lower in the heart, placenta, ovary, skeletal muscle, mammary gland, kidney and several structures in the brain as the hypothalamus (supraoptic and periventricular nuclei), pituitary, olfactory bulb and pineal gland.

Its subcellular location is the cell membrane. Functionally, g protein-coupled receptor for peptide hormones apelin (APLN) and apelin receptor early endogenous ligand (APELA/ELA), that plays a role in the regulation of normal cardiovascular function and fluid homeostasis. When acting as apelin receptor, activates both G(i) protein pathway that inhibits adenylate cyclase activity, and the beta-arrestin pathway that promotes internalization of the receptor. APLNR/APJ also functions as mechanoreceptor that is activated by pathological stimuli in a G-protein-independent fashion to induce beta-arrestin signaling, hence eliciting cardiac hypertrophy. However, the presence of apelin ligand blunts cardiac hypertrophic induction from APLNR/APJ on response to pathological stimuli. Plays a key role in early development such as gastrulation, blood vessels formation and heart morphogenesis by acting as a APELA receptor. May promote angioblast migration toward the embryonic midline, i.e. the position of the future vessel formation, during vasculogenesis. Promotes sinus venosus (SV)-derived endothelial cells migration into the developing heart to promote coronary blood vessel development. Also plays a role in various processes in adults such as regulation of blood vessel formation, blood pressure, heart contractility and heart failure. This chain is Apelin receptor, found in Rattus norvegicus (Rat).